A 149-amino-acid polypeptide reads, in one-letter code: MADQLTDDQIAEFKEAFSLFDKDGDGCITTKELGTVMRSLGQNPTEAELQDMINEVDADGNGTIDFPEFLNLMARKMKDTDSEEELKEAFRVFDKDQNGFISAAELRHVMTNLGEKLTDEEVDEMIREADVDGDGQINYEEFVKVMMAK.

Ala2 is modified (N-acetylalanine). 4 EF-hand domains span residues 8 to 43, 44 to 79, 81 to 116, and 117 to 149; these read DQIAEFKEAFSLFDKDGDGCITTKELGTVMRSLGQN, PTEAELQDMINEVDADGNGTIDFPEFLNLMARKMKD, DSEEELKEAFRVFDKDQNGFISAAELRHVMTNLGEK, and LTDEEVDEMIREADVDGDGQINYEEFVKVMMAK. Asp21, Asp23, Asp25, Cys27, Glu32, Asp57, Asp59, Asn61, Thr63, Glu68, Asp94, Asp96, Asn98, and Glu105 together coordinate Ca(2+). The residue at position 116 (Lys116) is an N6,N6,N6-trimethyllysine. Residues Asp130, Asp132, Asp134, Gln136, and Glu141 each contribute to the Ca(2+) site.

The protein belongs to the calmodulin family.

In terms of biological role, calmodulin mediates the control of a large number of enzymes, ion channels and other proteins by Ca(2+). Among the enzymes to be stimulated by the calmodulin-Ca(2+) complex are a number of protein kinases and phosphatases. The polypeptide is Calmodulin-1 (CAM1-1) (Oryza sativa subsp. indica (Rice)).